The chain runs to 798 residues: Protocadherin beta-2 (798 aa).

Residues methionine 1–cysteine 30 form the signal peptide. Residues glutamine 31–leucine 692 are Extracellular-facing. Cadherin domains are found at residues valine 37–phenylalanine 135, leucine 136–phenylalanine 244, tyrosine 249–leucine 349, leucine 354–phenylalanine 453, and tyrosine 458–valine 563. Asparagine 171 is a glycosylation site (N-linked (GlcNAc...) asparagine). Lysine 299 is modified (N6-acetyllysine). N-linked (GlcNAc...) asparagine glycosylation is found at asparagine 420 and asparagine 438. N-linked (GlcNAc...) asparagine glycosylation occurs at asparagine 569. Residues glycine 570–leucine 673 form the Cadherin 6 domain. A helical membrane pass occupies residues valine 693–valine 713. The Cytoplasmic segment spans residues arginine 714–threonine 798.

The protein resides in the cell membrane. Functionally, potential calcium-dependent cell-adhesion protein. May be involved in the establishment and maintenance of specific neuronal connections in the brain. This Homo sapiens (Human) protein is Protocadherin beta-2 (PCDHB2).